Consider the following 349-residue polypeptide: tRNA pseudouridine synthase D (349 aa).

Substrate is bound at residue Phe-26. Asp-79 serves as the catalytic Nucleophile. Asn-128 contacts substrate. A TRUD domain is found at 154-302 (GVPNYFGSQR…VEGSRRAVLL (149 aa)). Substrate is bound at residue Phe-328.

It belongs to the pseudouridine synthase TruD family.

It catalyses the reaction uridine(13) in tRNA = pseudouridine(13) in tRNA. Responsible for synthesis of pseudouridine from uracil-13 in transfer RNAs. This is tRNA pseudouridine synthase D from Yersinia pestis bv. Antiqua (strain Antiqua).